The following is a 583-amino-acid chain: Aspartate--tRNA ligase (583 aa).

Glutamate 174 is an L-aspartate binding site. Residues 198–201 (QITK) are aspartate. Position 220 (arginine 220) interacts with L-aspartate. Residues 220 to 222 (RDE) and glutamine 229 contribute to the ATP site. Histidine 443 provides a ligand contact to L-aspartate. Residue glutamate 477 participates in ATP binding. An L-aspartate-binding site is contributed by arginine 484. Residue 529–532 (GLDR) coordinates ATP.

It belongs to the class-II aminoacyl-tRNA synthetase family. Type 1 subfamily. Homodimer.

It is found in the cytoplasm. The catalysed reaction is tRNA(Asp) + L-aspartate + ATP = L-aspartyl-tRNA(Asp) + AMP + diphosphate. In terms of biological role, catalyzes the attachment of L-aspartate to tRNA(Asp) in a two-step reaction: L-aspartate is first activated by ATP to form Asp-AMP and then transferred to the acceptor end of tRNA(Asp). The sequence is that of Aspartate--tRNA ligase from Streptococcus agalactiae serotype III (strain NEM316).